The following is a 152-amino-acid chain: UPF0266 membrane protein YobD (152 aa).

The next 3 helical transmembrane spans lie at 6–26 (LVLI…QFIM), 45–65 (VDSV…VTSH), and 67–87 (AQMT…IFWI).

It belongs to the UPF0266 family.

The protein localises to the cell inner membrane. The sequence is that of UPF0266 membrane protein YobD from Salmonella agona (strain SL483).